We begin with the raw amino-acid sequence, 529 residues long: Beta-hexosaminidase subunit alpha (529 aa).

Residues 1–22 (MTSSRLWFSLLLAAAFAGRATA) form the signal peptide. A propeptide spanning residues 23-88 (LWPWPQNFQT…PRPYLTGKRH (66 aa)) is cleaved from the precursor. The cysteines at positions 58 and 104 are disulfide-linked. N-linked (GlcNAc...) asparagine glycans are attached at residues Asn-115, Asn-157, and Asn-295. A disulfide bond links Cys-277 and Cys-328. The Proton donor role is filled by Glu-323. The tract at residues 423-424 (NR) is critical for hydrolysis GM2 gangliosides. An intrachain disulfide couples Cys-505 to Cys-522.

This sequence belongs to the glycosyl hydrolase 20 family. As to quaternary structure, there are 3 beta-hexosaminidase isozymes: isozyme A (hexosaminidase A) is a heterodimer composed of one subunit alpha and one subunit beta (chain A and B); isozyme B (hexosaminidase B) is a homodimer of two beta subunits (two chains A and B); isozyme S (hexosaminidase S) is a homodimer of two alpha subunits. The composition of the dimer (isozyme A versus isozyme S) has a significant effect on the substrate specificity of the alpha subunit active site. In terms of processing, N-linked glycan at Asn-115 consists of Man(3)-GlcNAc(2). N-linked glycan at Asn-157 consists of either GlcNAc or GlcNAc(2)-Man(7-9). N-linked glycan at Asn-295 consists of either GlcNAc, GlcNAc-Fuc, or GlcNAc(2)-Man(4).

It is found in the lysosome. It catalyses the reaction Hydrolysis of terminal non-reducing N-acetyl-D-hexosamine residues in N-acetyl-beta-D-hexosaminides.. The catalysed reaction is N-acetyl-beta-D-galactosaminyl-(1-&gt;4)-beta-D-3-sulfogalactosyl-(1-&gt;4)-beta-D-glucosyl-(1&lt;-&gt;1')-ceramide + H2O = a beta-D-3-sulfogalactosyl-(1-&gt;4)-beta-D-glucosyl-(1&lt;-&gt;1')-ceramide + N-acetyl-beta-D-galactosamine. The enzyme catalyses a ganglioside GM2 (d18:1(4E)) + H2O = a ganglioside GM3 (d18:1(4E)) + N-acetyl-beta-D-galactosamine. It carries out the reaction a ganglioside GM2 + H2O = a ganglioside GM3 + N-acetyl-beta-D-galactosamine. It catalyses the reaction beta-D-GalNAc-(1-&gt;4)-alpha-L-IdoA-(1-&gt;3)-beta-D-GalNAc-4-sulfate-(1-&gt;4)-alpha-L-IdoA-(1-&gt;3)-D-GalNAc-4-sulfate + H2O = alpha-L-IdoA-(1-&gt;3)-beta-D-GalNAc-4-sulfate-(1-&gt;4)-alpha-L-IdoA-(1-&gt;3)-D-GalNAc-4-sulfate + N-acetyl-D-galactosamine. The catalysed reaction is N-acetyl-beta-D-6-sulfogalactosaminyl-(1-&gt;4)-alpha-L-iduronyl-(1-&gt;3)-N-acetyl-D-6-sulfogalactosamine + H2O = alpha-L-iduronyl-(1-&gt;3)-N-acetyl-D-6-sulfogalactosamine + N-acetyl-D-6-sulfogalactosamine. Its activity is regulated as follows. Addition of GM2A stimulates the hydrolysis of sulfated glycosphingolipid SM2 and the ganglioside GM2. Hydrolyzes the non-reducing end N-acetyl-D-hexosamine and/or sulfated N-acetyl-D-hexosamine of glycoconjugates, such as the oligosaccharide moieties from proteins and neutral glycolipids, or from certain mucopolysaccharides. The isozyme S is as active as the isozyme A on the anionic bis-sulfated glycans, the chondroitin-6-sulfate trisaccharide (C6S-3), and the dermatan sulfate pentasaccharide, and the sulfated glycosphingolipid SM2. The isozyme B does not hydrolyze each of these substrates, however hydrolyzes efficiently neutral oligosaccharide. Only the isozyme A is responsible for the degradation of GM2 gangliosides in the presence of GM2A. The polypeptide is Beta-hexosaminidase subunit alpha (Homo sapiens (Human)).